A 387-amino-acid chain; its full sequence is Protein ERD1 homolog 2 (387 aa).

8 consecutive transmembrane segments (helical) span residues isoleucine 20 to isoleucine 40, alanine 92 to leucine 112, proline 126 to tryptophan 146, phenylalanine 177 to glycine 197, glycine 217 to leucine 237, leucine 252 to histidine 272, glycine 285 to tryptophan 305, and phenylalanine 326 to serine 346. An EXS domain is found at aspartate 212 to serine 387.

Belongs to the ERD1 family.

The protein localises to the membrane. In Schizosaccharomyces pombe (strain 972 / ATCC 24843) (Fission yeast), this protein is Protein ERD1 homolog 2.